The following is a 337-amino-acid chain: Basic membrane protein A2 (337 aa).

The signal sequence occupies residues 1–17; sequence MNKLLLLILFECIIFLS. C18 carries N-palmitoyl cysteine lipidation. The S-diacylglycerol cysteine moiety is linked to residue C18.

It belongs to the BMP lipoprotein family. In terms of assembly, monomer.

Its subcellular location is the cell inner membrane. Immunogenic protein. May be part of an ABC-type nucleoside uptake system involved in the purine salvage pathway. This chain is Basic membrane protein A2 (bmpA2), found in Borrelia garinii subsp. bavariensis (strain ATCC BAA-2496 / DSM 23469 / PBi) (Borreliella bavariensis).